The following is a 108-amino-acid chain: Pyrimidine/purine nucleoside phosphorylase (108 aa).

The protein belongs to the nucleoside phosphorylase PpnP family.

It carries out the reaction a purine D-ribonucleoside + phosphate = a purine nucleobase + alpha-D-ribose 1-phosphate. The catalysed reaction is adenosine + phosphate = alpha-D-ribose 1-phosphate + adenine. The enzyme catalyses cytidine + phosphate = cytosine + alpha-D-ribose 1-phosphate. It catalyses the reaction guanosine + phosphate = alpha-D-ribose 1-phosphate + guanine. It carries out the reaction inosine + phosphate = alpha-D-ribose 1-phosphate + hypoxanthine. The catalysed reaction is thymidine + phosphate = 2-deoxy-alpha-D-ribose 1-phosphate + thymine. The enzyme catalyses uridine + phosphate = alpha-D-ribose 1-phosphate + uracil. It catalyses the reaction xanthosine + phosphate = alpha-D-ribose 1-phosphate + xanthine. Its function is as follows. Catalyzes the phosphorolysis of diverse nucleosides, yielding D-ribose 1-phosphate and the respective free bases. Can use uridine, adenosine, guanosine, cytidine, thymidine, inosine and xanthosine as substrates. Also catalyzes the reverse reactions. The protein is Pyrimidine/purine nucleoside phosphorylase of Polaromonas naphthalenivorans (strain CJ2).